The chain runs to 207 residues: FMN-dependent NADH:quinone oxidoreductase (207 aa).

An FMN-binding site is contributed by Ser-10.

Belongs to the azoreductase type 1 family. Homodimer. The cofactor is FMN.

It catalyses the reaction 2 a quinone + NADH + H(+) = 2 a 1,4-benzosemiquinone + NAD(+). The enzyme catalyses N,N-dimethyl-1,4-phenylenediamine + anthranilate + 2 NAD(+) = 2-(4-dimethylaminophenyl)diazenylbenzoate + 2 NADH + 2 H(+). Functionally, quinone reductase that provides resistance to thiol-specific stress caused by electrophilic quinones. Its function is as follows. Also exhibits azoreductase activity. Catalyzes the reductive cleavage of the azo bond in aromatic azo compounds to the corresponding amines. This Shouchella clausii (strain KSM-K16) (Alkalihalobacillus clausii) protein is FMN-dependent NADH:quinone oxidoreductase.